The sequence spans 308 residues: N-acetylneuraminate lyase (308 aa).

Positions 50 and 51 each coordinate aceneuramate. Tyr-142 acts as the Proton donor in catalysis. The active-site Schiff-base intermediate with substrate is the Lys-172. Aceneuramate contacts are provided by Ser-174, Gly-198, Asp-200, Glu-201, and Ser-217.

Belongs to the DapA family. NanA subfamily. Homotetramer.

The protein resides in the cytoplasm. The enzyme catalyses aceneuramate = aldehydo-N-acetyl-D-mannosamine + pyruvate. It functions in the pathway amino-sugar metabolism; N-acetylneuraminate degradation. Catalyzes the cleavage of N-acetylneuraminic acid (sialic acid) to form pyruvate and N-acetylmannosamine via a Schiff base intermediate. It prevents sialic acids from being recycled and returning to the cell surface. Involved in the N-glycolylneuraminic acid (Neu5Gc) degradation pathway. This chain is N-acetylneuraminate lyase, found in Gallus gallus (Chicken).